Consider the following 641-residue polypeptide: Uromodulin (641 aa).

A signal peptide spans 1 to 24; sequence MGQPPLTWMLMVVVASWFITTAAT. Residue Asn-25 is glycosylated (N-linked (GlcNAc...) asparagine). The region spanning 28–64 is the EGF-like 1 domain; that stretch reads EARWCSECHSNATCTEDEAVTTCTCQEGFTGDGLTCV. 21 disulfides stabilise this stretch: Cys-32–Cys-41, Cys-35–Cys-50, Cys-52–Cys-63, Cys-69–Cys-83, Cys-77–Cys-92, Cys-94–Cys-106, Cys-112–Cys-126, Cys-120–Cys-135, Cys-137–Cys-148, Cys-150–Cys-161, Cys-155–Cys-170, Cys-174–Cys-267, Cys-195–Cys-282, Cys-217–Cys-255, Cys-223–Cys-287, Cys-248–Cys-256, Cys-297–Cys-306, Cys-300–Cys-315, Cys-317–Cys-347, Cys-335–Cys-425, and Cys-366–Cys-389. One can recognise an EGF-like 2; calcium-binding domain in the interval 65 to 107; it reads DLDECAIPGAHNCSANSSCVNTPGSFSCVCPEGFRLSPGLGCT. A glycan (N-linked (GlcNAc...) asparagine) is linked at Asn-76. The region spanning 108–149 is the EGF-like 3; calcium-binding domain; sequence DVDECAEPGLSHCHALATCVNVVGNYLCVCPAGYRGDGWHCE. Residues 150–171 are beta hairpin; sequence CSPGSCGPGLDCVPEGDALVCA. The D10C stretch occupies residues 172-291; that stretch reads DPCQAHRTLD…CHLAYCTDPS (120 aa). N-linked (GlcNAc...) asparagine glycosylation occurs at Asn-232. Asn-275 carries an N-linked (GlcNAc...) asparagine glycan. Residues 292-323 enclose the EGF-like 4 domain; the sequence is SVEGTCEECSIDEDCKSDNGRWHCQCKQDFNI. Asn-322 carries N-linked (GlcNAc...) asparagine glycosylation. Residues 334 to 429 form a ZP-N region; the sequence is ECGANDMKVS…KINFACSYPL (96 aa). A ZP domain is found at 334–589; that stretch reads ECGANDMKVS…PTCSGTRFRS (256 aa). Residues 430-453 form a flexible ZP-N/ZP-C linker; important for secretion and polymerization into filaments region; sequence DMKVSLKTSLQPVVSALNITVGGT. The N-linked (GlcNAc...) asparagine glycan is linked to Asn-447. The tract at residues 454–464 is internal hydrophobic patch (IHP); sequence GMFTVRMALFQ. Residues 454–589 are ZP-C; that stretch reads GMFTVRMALF…PTCSGTRFRS (136 aa). 3 disulfide bridges follow: Cys-506-Cys-566, Cys-527-Cys-582, and Cys-571-Cys-578. The essential for cleavage by HPN stretch occupies residues 586–589; that stretch reads RFRS. An external hydrophobic patch (EHP); regulates polymerization into filaments region spans residues 598-606; sequence VLNLGPITR. A lipid anchor (GPI-anchor amidated serine) is attached at Ser-614. Residues 615-641 constitute a propeptide, removed in mature form; the sequence is RAAFSSLGLLKVWLPLLLSATLTLTFQ.

In terms of assembly, homodimer that then polymerizes into long filaments. The filaments can additionally assemble laterally to form a sheet. The filaments consist of a zigzag-shaped backbone with laterally protruding arms which interact with bacterial adhesin fimH. Two fimH molecules can bind to a single UMOD monomer. Post-translationally, N-glycosylated. In terms of processing, proteolytically cleaved at a conserved C-terminal proteolytic cleavage site to generate the secreted form found in urine. This cleavage is catalyzed by HPN.

The protein resides in the apical cell membrane. Its subcellular location is the basolateral cell membrane. It is found in the cell projection. The protein localises to the cilium membrane. It localises to the secreted. Functionally, functions in biogenesis and organization of the apical membrane of epithelial cells of the thick ascending limb of Henle's loop (TALH), where it promotes formation of complex filamentous gel-like structure that may play a role in the water barrier permeability. May serve as a receptor for binding and endocytosis of cytokines (IL-1, IL-2) and TNF. Facilitates neutrophil migration across renal epithelia. In the urine, may contribute to colloid osmotic pressure, retards passage of positively charged electrolytes, and inhibits formation of liquid containing supersaturated salts and subsequent formation of salt crystals. Protects against urinary tract infections by binding to type 1 fimbriated E.coli. Binds to bacterial adhesin fimH which mediates the stable formation of bacterial aggregates, prevents the binding of E.coli to uroplakins UPK1A and UPK1B which act as urothelial receptors for type I fimbriae, and allows for pathogen clearance through micturation. Also promotes aggregation of other bacteria including K.pneumoniae, P.aeruginosa and S.mitis and so may also protect against other uropathogens. The sequence is that of Uromodulin (UMOD) from Pongo abelii (Sumatran orangutan).